The chain runs to 61 residues: Photosystem II reaction center protein K (61 aa).

Positions 1–24 are excised as a propeptide; sequence MLNIFNLICICFNSALFSSTFLVA. The helical transmembrane segment at 40-60 threads the bilayer; the sequence is MPVIPLFFLLLAFVWQAAVSF.

This sequence belongs to the PsbK family. As to quaternary structure, PSII is composed of 1 copy each of membrane proteins PsbA, PsbB, PsbC, PsbD, PsbE, PsbF, PsbH, PsbI, PsbJ, PsbK, PsbL, PsbM, PsbT, PsbX, PsbY, PsbZ, Psb30/Ycf12, at least 3 peripheral proteins of the oxygen-evolving complex and a large number of cofactors. It forms dimeric complexes.

The protein resides in the plastid. It localises to the chloroplast thylakoid membrane. In terms of biological role, one of the components of the core complex of photosystem II (PSII). PSII is a light-driven water:plastoquinone oxidoreductase that uses light energy to abstract electrons from H(2)O, generating O(2) and a proton gradient subsequently used for ATP formation. It consists of a core antenna complex that captures photons, and an electron transfer chain that converts photonic excitation into a charge separation. The protein is Photosystem II reaction center protein K of Sinapis alba (White mustard).